A 931-amino-acid chain; its full sequence is Scaffold attachment factor B1 (931 aa).

Positions M1–S24 are enriched in low complexity. The interval M1–R35 is disordered. At A2 the chain carries N-acetylalanine. S24 and S55 each carry phosphoserine. An SAP domain is found at L31 to I65. Residues A64–E121 are disordered. The segment covering E67–V77 has biased composition (acidic residues). The residue at position 79 (S79) is a Phosphoserine. The span at E98 to T118 shows a compositional bias: acidic residues. Residues K171 and K185 each participate in a glycyl lysine isopeptide (Lys-Gly) (interchain with G-Cter in SUMO2) cross-link. Phosphoserine occurs at positions 194, 196, and 208. 2 disordered regions span residues E205–Q304 and K316–F430. Residues C224 to G233 show a composition bias toward basic and acidic residues. K230 is covalently cross-linked (Glycyl lysine isopeptide (Lys-Gly) (interchain with G-Cter in SUMO)). Residues E267–D287 show a composition bias toward acidic residues. K316 participates in a covalent cross-link: Glycyl lysine isopeptide (Lys-Gly) (interchain with G-Cter in SUMO). The segment covering E341–E356 has biased composition (polar residues). The segment covering E368 to A380 has biased composition (basic and acidic residues). K403 participates in a covalent cross-link: Glycyl lysine isopeptide (Lys-Gly) (interchain with G-Cter in SUMO2). Phosphoserine occurs at positions 405 and 406. The segment covering D412 to R423 has biased composition (basic and acidic residues). K414 is covalently cross-linked (Glycyl lysine isopeptide (Lys-Gly) (interchain with G-Cter in SUMO2)). The 79-residue stretch at R428–S506 folds into the RRM domain. A Phosphoserine modification is found at S437. 2 stretches are compositionally biased toward basic and acidic residues: residues S500–R573 and G581–K592. 4 disordered regions span residues S500 to E663, R691 to Q720, R759 to D843, and R872 to Q931. Residues K505, K536, K565, and K592 each participate in a glycyl lysine isopeptide (Lys-Gly) (interchain with G-Cter in SUMO2) cross-link. The interaction with POLR2A; SFRS1; SFRS9 and SFRS10 stretch occupies residues T550–R816. A Glycyl lysine isopeptide (Lys-Gly) (interchain with G-Cter in SUMO1); alternate cross-link involves residue K600. A Glycyl lysine isopeptide (Lys-Gly) (interchain with G-Cter in SUMO2); alternate cross-link involves residue K600. Phosphoserine is present on residues S602, S604, S623, and S626. The span at G603–E663 shows a compositional bias: basic and acidic residues. The Nuclear localization signal motif lies at K621 to D638. K629 carries the post-translational modification N6-acetyllysine. The span at R759–D820 shows a compositional bias: basic and acidic residues. An Omega-N-methylarginine modification is found at R834. Residues R892, R898, R908, and R914 each carry the asymmetric dimethylarginine modification.

Monomer and homodimer. Interacts with KHDRBS3. Interacts with CLK2. Interacts with POLR2A, ASF/SRSF1, SRp30c/SRFS9 and TRA2B/SFRS10. Interacts with SRPK1 and inhibits its activity. Interacts with RBMX. Interacts with FUS. Interacts with ZBED4. Phosphorylated by CDC-like kinase 2 (CLK2). Post-translationally, sumoylated by PIAS1 with SUMO1 and SUMO2/3, desumoylated by SENP1. Sumoylation is required for transcriptional repressor activity.

Its subcellular location is the nucleus. In terms of biological role, binds to scaffold/matrix attachment region (S/MAR) DNA and forms a molecular assembly point to allow the formation of a 'transcriptosomal' complex (consisting of SR proteins and RNA polymerase II) coupling transcription and RNA processing. Functions as an estrogen receptor corepressor and can also bind to the HSP27 promoter and decrease its transcription. Thereby acts as a negative regulator of cell proliferation. When associated with RBMX, binds to and stimulates transcription from the SREBF1 promoter. The protein is Scaffold attachment factor B1 (Safb) of Rattus norvegicus (Rat).